Consider the following 463-residue polypeptide: Major capsid protein (463 aa).

It belongs to the NCLDV major capsid protein family. Homotrimer.

The protein resides in the virion. In terms of biological role, major capsid protein that self assembles to form an icosahedral capsid. Represents around 50% of the total virion protein mass. This chain is Major capsid protein (MCP), found in Rana tigrina ranavirus.